The following is a 312-amino-acid chain: Ribosomal RNA small subunit methyltransferase H (312 aa).

Residues 36–38 (GGH), Asp55, Phe81, Asp103, and Gln110 each bind S-adenosyl-L-methionine.

Belongs to the methyltransferase superfamily. RsmH family.

It is found in the cytoplasm. It catalyses the reaction cytidine(1402) in 16S rRNA + S-adenosyl-L-methionine = N(4)-methylcytidine(1402) in 16S rRNA + S-adenosyl-L-homocysteine + H(+). Its function is as follows. Specifically methylates the N4 position of cytidine in position 1402 (C1402) of 16S rRNA. The sequence is that of Ribosomal RNA small subunit methyltransferase H from Marinomonas sp. (strain MWYL1).